We begin with the raw amino-acid sequence, 346 residues long: Heat-inducible transcription repressor HrcA (346 aa).

It belongs to the HrcA family.

Negative regulator of class I heat shock genes (grpE-dnaK-dnaJ and groELS operons). Prevents heat-shock induction of these operons. The sequence is that of Heat-inducible transcription repressor HrcA from Kineococcus radiotolerans (strain ATCC BAA-149 / DSM 14245 / SRS30216).